The chain runs to 460 residues: Homocitrate synthase (460 aa).

Residues 3-258 (VGILDSTLRE…IEVVKLNKLQ (256 aa)) form the Pyruvate carboxyltransferase domain. Arginine 11 lines the 2-oxoglutarate pocket. Residue glutamate 12 participates in Mg(2+) binding. 2-oxoglutarate-binding residues include histidine 75, arginine 135, and threonine 169. Residues histidine 197 and histidine 199 each coordinate Mg(2+). The active-site Proton acceptor is histidine 291.

The protein belongs to the alpha-IPM synthase/homocitrate synthase family. Homocitrate synthase LYS20/LYS21 subfamily. In terms of assembly, forms a homotetramer in the absence of lysine, and is in hexadecamer-octamer equilibrium in the presence of lysine. Mg(2+) is required as a cofactor. Mn(2+) serves as cofactor.

The enzyme catalyses acetyl-CoA + 2-oxoglutarate + H2O = (2R)-homocitrate + CoA + H(+). The protein operates within amino-acid biosynthesis; L-lysine biosynthesis via AAA pathway; L-alpha-aminoadipate from 2-oxoglutarate: step 1/5. With respect to regulation, inhibited by lysine. Its function is as follows. Catalyzes the aldol-type condensation of 2-oxoglutarate with acetyl-CoA to yield homocitrate. Carries out the first step of the alpha-aminoadipate (AAA) lysine biosynthesis pathway. This is Homocitrate synthase from Sulfurisphaera tokodaii (strain DSM 16993 / JCM 10545 / NBRC 100140 / 7) (Sulfolobus tokodaii).